The sequence spans 246 residues: Small ribosomal subunit protein uS2c (246 aa).

This sequence belongs to the universal ribosomal protein uS2 family.

Its subcellular location is the plastid. The protein resides in the chloroplast. The chain is Small ribosomal subunit protein uS2c (rps2) from Pelargonium hortorum (Common geranium).